The chain runs to 59 residues: MAKTIKVTQTKSSIGRLPKHKATLIGLGLRRIGHTVEREDTPAVRGMVNLVSYMVKVEE.

This sequence belongs to the universal ribosomal protein uL30 family. In terms of assembly, part of the 50S ribosomal subunit.

The sequence is that of Large ribosomal subunit protein uL30 from Yersinia pseudotuberculosis serotype I (strain IP32953).